Reading from the N-terminus, the 495-residue chain is Catalase B (495 aa).

Positions 1–25 (MSNNKKLTSLFGAPVSDRENSMTAG) are disordered. Catalysis depends on residues His55 and Asn128. Heme is bound at residue Tyr338.

This sequence belongs to the catalase family. In terms of assembly, homodimer. Heme is required as a cofactor.

It catalyses the reaction 2 H2O2 = O2 + 2 H2O. Its function is as follows. Decomposes hydrogen peroxide into water and oxygen; serves to protect cells from the toxic effects of hydrogen peroxide. This is Catalase B (katB) from Staphylococcus xylosus.